The following is a 745-amino-acid chain: uncharacterized protein (745 aa).

The HTH araC/xylS-type domain occupies 158 to 256; it reads NQVCDYIELH…HQTPKQYRGD (99 aa). 2 consecutive DNA-binding regions (H-T-H motif) follow at residues 175–196 and 223–246; these read SELS…TESL and ITDI…KHFT.

This is an uncharacterized protein from Staphylococcus aureus (strain Mu50 / ATCC 700699).